Here is a 158-residue protein sequence, read N- to C-terminus: Small ribosomal subunit protein uS15 (158 aa).

Positions 1-18 (MARMHARKRGKSGSKRPP) are enriched in basic residues. Residues 1 to 21 (MARMHARKRGKSGSKRPPRTA) form a disordered region.

This sequence belongs to the universal ribosomal protein uS15 family. In terms of assembly, part of the 30S ribosomal subunit.

This Pyrococcus horikoshii (strain ATCC 700860 / DSM 12428 / JCM 9974 / NBRC 100139 / OT-3) protein is Small ribosomal subunit protein uS15.